We begin with the raw amino-acid sequence, 813 residues long: MAEAGGAGSPALPPAPPHGSPRTLATAAGSSASCGPATAVAAAGTAEGPGGGGSARIAVKKAQLRSAPRAKKLEKLGVYSACKAEESCKCNGWKNPNPSPTPPRGDLQQIIVSLTESCRSCSHALAAHVSHLENVSEEEMDRLLGIVLDVEYLFTCVHKEEDADTKQVYFYLFKLLRKSILQRGKPVVEGSLEKKPPFEKPSIEQGVNNFVQYKFSHLPSKERQTTIELAKMFLNRINYWHLEAPSQRRLRSPNDDISGYKENYTRWLCYCNVPQFCDSLPRYETTKVFGRTLLRSVFTIMRRQLLEQARQEKDKLPLEKRTLILTHFPKFLSMLEEEVYSQNSPIWDQDFLSASSRTSPLGIQTVISPPVTGTALFSSNSTSHEQINGGRTSPGCRGSSGLEANPGEKRKMNNSHAPEEAKRSRVMGDIPVELINEVMSTITDPAGMLGPETNFLSAHSARDEAARLEERRGVIEFHVVGNSLNQKPNKKILMWLVGLQNVFSHQLPRMPKEYITRLVFDPKHKTLALIKDGRVIGGICFRMFPSQGFTEIVFCAVTSNEQVKGYGTHLMNHLKEYHIKHEILNFLTYADEYAIGYFKKQGFSKEIKIPKTKYVGYIKDYEGATLMGCELNPQIPYTEFSVIIKKQKEIIKKLIERKQAQIRKVYPGLSCFKDGVRQIPIESIPGIRETGWKPSGKEKSKEPKDPEQLYSTLKNILQQVKNHPNAWPFMEPVKRTEAPGYYEVIRFPMDLKTMSERLRNRYYVSKKLFMADLQRVFTNCKEYNPPESEYYKCASILEKFFFSKIKEAGLIDK.

Disordered regions lie at residues 1–55 (MAEA…GGSA) and 380–423 (NSTS…EAKR). Low complexity predominate over residues 32–46 (ASCGPATAVAAAGTA). Polar residues predominate over residues 380–391 (NSTSHEQINGGR). Residues 406–423 (PGEKRKMNNSHAPEEAKR) are compositionally biased toward basic and acidic residues. Residues 484 to 632 (LNQKPNKKIL…GATLMGCELN (149 aa)) enclose the N-acetyltransferase domain. Catalysis depends on Glu551, which acts as the Proton donor/acceptor. Acetyl-CoA is bound by residues 555–557 (CAV), 562–568 (QVKGYGT), and 593–596 (YAIG). The region spanning 704–808 (KDPEQLYSTL…KFFFSKIKEA (105 aa)) is the Bromo domain.

This sequence belongs to the acetyltransferase family. GCN5 subfamily. Interacts with BCAS3. Interacts with SIRT1. Interacts with EP300, CREBBP and DDX17. Component of a large chromatin remodeling complex, at least composed of MYSM1, KAT2B/PCAF, RBM10 and KIF11/TRIP5. Interacts with KLF1; the interaction does not acetylate KLF1 and there is no enhancement of its transactivational activity. Interacts with NFE4. Interacts with MECOM. Interacts with NR2C2 (hypophosphorylated and unsumoylated form); the interaction promotes the transactivation activity of NR2C2. Interacts with NFE4. Interacts with MECOM. Interacts with E2F1; the interaction acetylates E2F1 augmenting its DNA-binding and transcriptional activity. Interacts with NPAS2, BMAL1 and CLOCK. Interacts (unsumoylated form) with NR2C1; the interaction promotes transactivation activity. Interacts with CEBPB. Interacts with NR4A3. Interacts with TBX5. Interacts with PLK4. Interacts with RB1; this interaction leads to RB1 acetylation. Interacts with VRK1.

Its subcellular location is the nucleus. The protein resides in the cytoplasm. It localises to the cytoskeleton. The protein localises to the microtubule organizing center. It is found in the centrosome. It catalyses the reaction L-lysyl-[histone] + acetyl-CoA = N(6)-acetyl-L-lysyl-[histone] + CoA + H(+). The catalysed reaction is L-lysyl-[protein] + acetyl-CoA = N(6)-acetyl-L-lysyl-[protein] + CoA + H(+). The enzyme catalyses spermidine + acetyl-CoA = N(8)-acetylspermidine + CoA + H(+). Functions as a histone acetyltransferase (HAT) to promote transcriptional activation. Has significant histone acetyltransferase activity with core histones (H3 and H4), and also with nucleosome core particles. Has a a strong preference for acetylation of H3 at 'Lys-9' (H3K9ac). Also acetylates non-histone proteins, such as ACLY, MAPRE1/EB1, PLK4, RRP9/U3-55K and TBX5. Acts as a circadian transcriptional coactivator which enhances the activity of the circadian transcriptional activators: NPAS2-BMAL1 and CLOCK-BMAL1 heterodimers. Involved in heart and limb development by mediating acetylation of TBX5, acetylation regulating nucleocytoplasmic shuttling of TBX5. Acts as a negative regulator of centrosome amplification by mediating acetylation of PLK4. Acetylates RRP9/U3-55K, a core subunit of the U3 snoRNP complex, impairing pre-rRNA processing. Acetylates MAPRE1/EB1, promoting dynamic kinetochore-microtubule interactions in early mitosis. Also acetylates spermidine. This chain is Histone acetyltransferase KAT2B, found in Mus musculus (Mouse).